Reading from the N-terminus, the 241-residue chain is Probable transcriptional regulatory protein RSc2190 (241 aa).

Belongs to the TACO1 family.

The protein localises to the cytoplasm. This Ralstonia nicotianae (strain ATCC BAA-1114 / GMI1000) (Ralstonia solanacearum) protein is Probable transcriptional regulatory protein RSc2190.